The sequence spans 62 residues: Dual specificity mitogen-activated protein kinase kinase 3 (62 aa).

The Protein kinase domain occupies 1-62 (GKIAVSIVKA…VAKTMDAGCK (62 aa)).

It belongs to the protein kinase superfamily. STE Ser/Thr protein kinase family. MAP kinase kinase subfamily. Activated by phosphorylation on Ser/Thr catalyzed by MAP kinase kinase kinases.

The enzyme catalyses L-seryl-[protein] + ATP = O-phospho-L-seryl-[protein] + ADP + H(+). The catalysed reaction is L-threonyl-[protein] + ATP = O-phospho-L-threonyl-[protein] + ADP + H(+). It carries out the reaction L-tyrosyl-[protein] + ATP = O-phospho-L-tyrosyl-[protein] + ADP + H(+). Catalyzes the concomitant phosphorylation of a threonine and a tyrosine residue in a Thr-Glu-Tyr sequence located in MAP kinases. This Xenopus laevis (African clawed frog) protein is Dual specificity mitogen-activated protein kinase kinase 3 (map2k3).